The chain runs to 145 residues: Cell wall teichoic acid glycosylation protein GtcA (145 aa).

Transmembrane regions (helical) follow at residues 21–41 (IFMYLIMGGFTTIINIVTFWL), 45–65 (ILNWDYRIANTIAFIASVLFA), 91–111 (FFGFRCLTYIIDILVMILLIS), and 122–142 (IWTNIIVLVLNYVFSKWIIFK).

This sequence belongs to the GtrA family.

The protein resides in the cell membrane. In terms of biological role, involved in the decoration of cell wall teichoic acid with galactose and glucose. In Listeria monocytogenes, this protein is Cell wall teichoic acid glycosylation protein GtcA (gtcA).